Consider the following 201-residue polypeptide: Proteasome subunit beta type-2 (201 aa).

Methionine 1 carries the post-translational modification N-acetylmethionine.

It belongs to the peptidase T1B family. In terms of assembly, the 26S proteasome consists of a 20S proteasome core and two 19S regulatory subunits. The 20S proteasome core is a barrel-shaped complex made of 28 subunits that are arranged in four stacked rings. The two outer rings are each formed by seven alpha subunits, and the two inner rings are formed by seven beta subunits. The proteolytic activity is exerted by three beta-subunits PSMB5, PSMB6 and PSMB7. In terms of tissue distribution, detected in liver (at protein level).

It localises to the cytoplasm. The protein localises to the nucleus. Its function is as follows. Non-catalytic component of the 20S core proteasome complex involved in the proteolytic degradation of most intracellular proteins. This complex plays numerous essential roles within the cell by associating with different regulatory particles. Associated with two 19S regulatory particles, forms the 26S proteasome and thus participates in the ATP-dependent degradation of ubiquitinated proteins. The 26S proteasome plays a key role in the maintenance of protein homeostasis by removing misfolded or damaged proteins that could impair cellular functions, and by removing proteins whose functions are no longer required. Associated with the PA200 or PA28, the 20S proteasome mediates ubiquitin-independent protein degradation. This type of proteolysis is required in several pathways including spermatogenesis (20S-PA200 complex) or generation of a subset of MHC class I-presented antigenic peptides (20S-PA28 complex). The chain is Proteasome subunit beta type-2 (Psmb2) from Mus musculus (Mouse).